A 983-amino-acid chain; its full sequence is MKNLFNFFKTSSELRLAYRLLKQINQKRSFYGAMTDFDLANQTNIFKKRLANGEKLKDIRVDAFAVAREATKRILGKTPYDVQILGGLILDMGSVAEMKTGEGKTIASIPPVYLNALLGQGVIVSTVNEYLAERDAEDNGKVYNFLGLTVGINKTEMDANTKRMMYNADITYSVHSELGFDYLRDNMVFSAAEKVQRGLNFCLIDEVDSILIDEAKTPLIISGGKTNLPAQYLSANQFVNTLIAEDFYIDEETKGIKLNDKGIDKANAFFGLRNLYEIQNSEIVHRIQNALRANKVMKRDVEYIVQDGKIALVDQFTGRIMAGRSYSEGLQQALQAKEGLEIEPETKTLATITYQNFFRLFKKLSGMTGTAKTEEQEFIDVYNMRVNVIPTNKPMIRKDERDEIFATSHEKNQAIISEVERVHKRGQPILIGTSQVVDSETLSEMLNQKGLYHTVLNAKQNQLEAEIIAKAGRKNAITIATNMAGRGTDIILEPGVTELGGLYILGTDKAEARRIDNQLRGRSGRQGDVGISRFFISLQDQLFRRFTNFDQIFGAYGQTNGAIKGKYIHAVLLAAQKKIEGFNFDMRKTVLSYDDVIRQQRDLIYAQRDILLQIENFDHYIQKMIIRAVDIILSYDFIILPNQEIHYKNLINFLNDNLSRITHFNFGQIGIENYPIEQLNEFLIKQLETIYFKQIQSVLKENLGKTYFESERYIILSTLDSQWQNHIDTIDKLRSSANLVQYSQKNPYQIFTEEATKKFNILVAESAYQAIVSLFNNSNAEKIEYIKAILSDGTAISYPADSPQEIIDQIIASNEERIAAARKAKEEKQPEFIEKQLAKLKIEKVESGEEFELWKIGDNKLVNLKKEMPLDEKQNILVKMQQEQLEMMSEEEKNLIQEQNLEIEEIEEIEEEIQNENPQKVEFVDFKNDPDAYNKLIFGADYADKQLISSEEENNNEKTNININEDLERTKGEAQQTAKNPNE.

Residues Gln-83, 101 to 105, and Asp-489 each bind ATP; that span reads GEGKT. Residues 948-983 form a disordered region; the sequence is ISSEEENNNEKTNININEDLERTKGEAQQTAKNPNE. Residues 973–983 are compositionally biased toward polar residues; it reads EAQQTAKNPNE.

It belongs to the SecA family. As to quaternary structure, monomer and homodimer. Part of the essential Sec protein translocation apparatus which comprises SecA, SecYEG and auxiliary proteins SecDF. Other proteins may also be involved.

Its subcellular location is the cell membrane. The protein resides in the cytoplasm. It catalyses the reaction ATP + H2O + cellular proteinSide 1 = ADP + phosphate + cellular proteinSide 2.. Its function is as follows. Part of the Sec protein translocase complex. Interacts with the SecYEG preprotein conducting channel. Has a central role in coupling the hydrolysis of ATP to the transfer of proteins into and across the cell membrane, serving as an ATP-driven molecular motor driving the stepwise translocation of polypeptide chains across the membrane. This Mesomycoplasma hyopneumoniae (strain 7448) (Mycoplasma hyopneumoniae) protein is Protein translocase subunit SecA.